A 199-amino-acid polypeptide reads, in one-letter code: Adenine phosphoribosyltransferase (199 aa).

It belongs to the purine/pyrimidine phosphoribosyltransferase family. As to quaternary structure, homodimer.

The protein resides in the cytoplasm. The catalysed reaction is AMP + diphosphate = 5-phospho-alpha-D-ribose 1-diphosphate + adenine. It functions in the pathway purine metabolism; AMP biosynthesis via salvage pathway; AMP from adenine: step 1/1. In terms of biological role, catalyzes a salvage reaction resulting in the formation of AMP, that is energically less costly than de novo synthesis. This is Adenine phosphoribosyltransferase from Rhodopseudomonas palustris (strain BisB18).